The following is a 370-amino-acid chain: MYKSVETILVDIPTIRPHKLSVTTMQTQTLVLIKIITEDGIVGWGEATTIGGLNYGEESPESVKANIDTYFKPLLLSIKAPLNVAQTLKLIRKSINGNRFAKCAIQTALLEIQAKRLNVPVSELLGGRIRDRLPVLWTLASGDTDKDIAEAKKMIELKRHNTFKLKIGSNPLQHDVDHVIAIKKALGPEISVRVDVNRAWSELECVKGIQQLQDGGIDLIEQPCAIENTDALARLTARFDVAIMADEVLTGPDSAYRIAKKSGADVFAVKVEQSGGLIEACEVAKIARLAGISLYGGTMLEGPVGSIASAHAFSTFETLEFGTELFGPLLLTQSILKTPLQYENFELVVPNTPGLGIEVDEDKLEQLRRH.

Lysine 166 is a catalytic residue. 3 residues coordinate Mn(2+): aspartate 195, glutamate 221, and aspartate 246.

The protein belongs to the mandelate racemase/muconate lactonizing enzyme family. As to quaternary structure, homooctamer. Requires Mn(2+) as cofactor.

The catalysed reaction is (S)-muconolactone = cis,cis-muconate + H(+). Its pathway is aromatic compound metabolism; beta-ketoadipate pathway; 5-oxo-4,5-dihydro-2-furylacetate from catechol: step 2/3. Functionally, catalyzes a syn cycloisomerization. The polypeptide is Muconate cycloisomerase 1 (catB) (Acinetobacter baylyi (strain ATCC 33305 / BD413 / ADP1)).